The following is a 618-amino-acid chain: Cell pattern formation-associated protein STU1 (618 aa).

Residues 13-28 are compositionally biased toward polar residues; that stretch reads MSAGPTQQPPTVTSYN. Residues 13-105 form a disordered region; it reads MSAGPTQQPP…FDTSGQIAPP (93 aa). A compositionally biased stretch (low complexity) spans 48–59; it reads YGGYPYTNGMPS. Positions 91 to 101 are enriched in polar residues; the sequence is NQYSGFDTSGQ. Residues 110–216 form the HTH APSES-type domain; the sequence is RVTATLWEDE…HNISALLYHP (107 aa). A DNA-binding region (H-T-H motif) is located at residues 144-165; sequence GTKLLNVAGMTRGRRDGILKSE. Disordered stretches follow at residues 229–355 and 390–618; these read AERR…YDGS and SEMG…SRRR. 4 stretches are compositionally biased toward polar residues: residues 256–266, 284–298, 305–326, and 336–355; these read MSQNGSQSLSG, TSAS…SDSF, AMSN…TRSM, and GSTL…YDGS. Over residues 438–451 the composition is skewed to basic and acidic residues; the sequence is DHEHDPEYTHDSRT. A compositionally biased stretch (polar residues) spans 452-476; sequence YDNSQSQYNYTAPPVSSISSEQAHV. The span at 494–512 shows a compositional bias: low complexity; the sequence is PRSAAAPQAYYQQAYSTSP. Residues 513 to 563 are compositionally biased toward polar residues; the sequence is RSATHQSTSNLYNVMSNDRGSTTNGSANGDVYSQSTDLSNGYATPVTNGNA. The tract at residues 566-588 is nuclear localization domain; that stretch reads KRGRDDDDDRSSSSGQMDLKRRK.

It belongs to the EFG1/PHD1/stuA family.

It is found in the nucleus. Transcription factor that regulates asexual reproduction. Binds the StuA-response elements (StRE) with the consensus sequence 5'-(A/T)CGCG(T/A)N(A/C)-3' at the promoters of target genes. Required for appressorium-mediated infection of rice leaves due to its involvement in the mobilization of lipids and glycogen. The sequence is that of Cell pattern formation-associated protein STU1 from Pyricularia oryzae (strain 70-15 / ATCC MYA-4617 / FGSC 8958) (Rice blast fungus).